The sequence spans 84 residues: U4-theraphotoxin-Hhn1aa (84 aa).

An N-terminal signal peptide occupies residues 1–22 (MKVTLIAILTCAAVLVLHTTAA). Residues 23–47 (EELEESQLMEVGMPDTELAAVDEER) constitute a propeptide that is removed on maturation. Intrachain disulfides connect Cys51-Cys65 and Cys55-Cys76.

It belongs to the neurotoxin 12 (Hwtx-2) family. 02 (Hwtx-2) subfamily. As to expression, expressed by the venom gland.

The protein resides in the secreted. Postsynaptic neurotoxin. This Cyriopagopus hainanus (Chinese bird spider) protein is U4-theraphotoxin-Hhn1aa.